A 294-amino-acid polypeptide reads, in one-letter code: Shikimate dehydrogenase (NADP(+)) (294 aa).

Shikimate is bound by residues 14–16 (SKS) and Thr61. Catalysis depends on Lys65, which acts as the Proton acceptor. Asp77 lines the NADP(+) pocket. Shikimate is bound by residues Asn86 and Asp102. NADP(+) is bound by residues 140-144 (GSGGA) and Leu235. Tyr237 is a shikimate binding site. Position 259 (Gly259) interacts with NADP(+).

The protein belongs to the shikimate dehydrogenase family. Homodimer.

It carries out the reaction shikimate + NADP(+) = 3-dehydroshikimate + NADPH + H(+). It functions in the pathway metabolic intermediate biosynthesis; chorismate biosynthesis; chorismate from D-erythrose 4-phosphate and phosphoenolpyruvate: step 4/7. Functionally, involved in the biosynthesis of the chorismate, which leads to the biosynthesis of aromatic amino acids. Catalyzes the reversible NADPH linked reduction of 3-dehydroshikimate (DHSA) to yield shikimate (SA). The sequence is that of Shikimate dehydrogenase (NADP(+)) from Blochmanniella floridana.